A 287-amino-acid chain; its full sequence is 4-diphosphocytidyl-2-C-methyl-D-erythritol kinase (287 aa).

Lys10 is an active-site residue. Position 92–102 (92–102 (PLAAGLAGGSA)) interacts with ATP. Asp134 is an active-site residue.

The protein belongs to the GHMP kinase family. IspE subfamily.

It catalyses the reaction 4-CDP-2-C-methyl-D-erythritol + ATP = 4-CDP-2-C-methyl-D-erythritol 2-phosphate + ADP + H(+). The protein operates within isoprenoid biosynthesis; isopentenyl diphosphate biosynthesis via DXP pathway; isopentenyl diphosphate from 1-deoxy-D-xylulose 5-phosphate: step 3/6. Catalyzes the phosphorylation of the position 2 hydroxy group of 4-diphosphocytidyl-2C-methyl-D-erythritol. The protein is 4-diphosphocytidyl-2-C-methyl-D-erythritol kinase of Caldanaerobacter subterraneus subsp. tengcongensis (strain DSM 15242 / JCM 11007 / NBRC 100824 / MB4) (Thermoanaerobacter tengcongensis).